Consider the following 988-residue polypeptide: Squamosa promoter-binding-like protein 16 (988 aa).

Residues 52-79 (GTPVDLTRPSKKVRSGSPGSGGGGGGNY) are disordered. The span at 69–78 (PGSGGGGGGN) shows a compositional bias: gly residues. The SBP-type zinc finger occupies 79–156 (YPKCQVDNCK…DGHNRRRRKT (78 aa)). Positions 82, 87, 104, 107, 123, 126, 130, and 142 each coordinate Zn(2+). The Bipartite nuclear localization signal signature appears at 139 to 155 (KRSCRRRLDGHNRRRRK). 2 disordered regions span residues 240-262 (RKNPEQPSPMNPQNSMNGASSPS) and 289-416 (GFGN…DTST). 3 stretches are compositionally biased toward polar residues: residues 250-262 (NPQNSMNGASSPS), 301-311 (LTSSDHSATTS), and 327-358 (RTSSTNHSPSQYSDSRGQDTRSSLSLQLFTSS). The span at 368 to 379 (ASSTKYYSSASS) shows a compositional bias: low complexity.

Zn(2+) serves as cofactor.

The protein resides in the nucleus. Trans-acting factor that binds specifically to the consensus nucleotide sequence 5'-TNCGTACAA-3'. The protein is Squamosa promoter-binding-like protein 16 (SPL16) of Arabidopsis thaliana (Mouse-ear cress).